A 435-amino-acid polypeptide reads, in one-letter code: MLEVEVESDNKHLVADELIALQSIYPEIHLDGNNYGRLNIPVNTESDYFLSFKSPDESTLTDTIVVRHFPDLVMEFFLPEAYPFNSPPTFFLKSSWLPLKQKRVLTSSLIKLWNEIHDCVLFDAIEHVRSIATIAFHLPTEMVFPGGFDDLKKEILAFDKNAKLLEFQIRKFQCNVCFDEFNGTDCFQLTRCGHVSCQSCLRDYYTMCIQEGMFSQIKCIDLDCGKDAPVLTLKELESIVGVQLTNRYKELEEKRRYENDSNIIFCPRSFCQGPSKRDPGQKLAICQKCDFAFCSFCQATWHGDLSPCKLEGDSKKLVEMYLNYQENEPEKALELEKRYGKRIIDRLVEQVKNDEEAEKWVLLNGQRCPTCDRVVERIDGCCHMNCLCGTHFCFLCGAYLMEQNPYKHFNDPVSSCYGMLFASAAEKQRFSENWT.

The RWD domain maps to 16–135; sequence DELIALQSIY…EHVRSIATIA (120 aa). A TRIAD supradomain region spans residues 170–420; that stretch reads RKFQCNVCFD…DPVSSCYGML (251 aa). Zn(2+) contacts are provided by Cys-174, Cys-177, Cys-192, His-194, Cys-197, Cys-200, Cys-219, Cys-224, Cys-266, Cys-271, Cys-286, Cys-289, Cys-294, Cys-297, His-302, Cys-308, Cys-368, and Cys-371. An RING-type 1 zinc finger spans residues 174-224; it reads CNVCFDEFNGTDCFQLTRCGHVSCQSCLRDYYTMCIQEGMFSQIKCIDLDC. The IBR-type zinc-finger motif lies at 245 to 308; sequence TNRYKELEEK…ATWHGDLSPC (64 aa). The RING-type 2; atypical zinc-finger motif lies at 368–396; the sequence is CPTCDRVVERIDGCCHMNCLCGTHFCFLC. Residue Cys-381 is part of the active site. Positions 386, 388, 393, 396, 408, and 416 each coordinate Zn(2+).

It belongs to the RBR family. RNF14 subfamily.

The protein localises to the cytoplasm. It is found in the nucleus. It catalyses the reaction [E2 ubiquitin-conjugating enzyme]-S-ubiquitinyl-L-cysteine + [acceptor protein]-L-lysine = [E2 ubiquitin-conjugating enzyme]-L-cysteine + [acceptor protein]-N(6)-ubiquitinyl-L-lysine.. The protein operates within protein modification; protein ubiquitination. E3 ubiquitin-protein ligase involved in the rescue of stalled ribosomes by promoting ubiquitination and degradation of proteins on stalled ribosomes. Specifically required to resolve RNA-protein cross-links caused by reactive aldehydes, which trigger translation stress by stalling ribosomes: acts by catalying 'Lys-6'-linked ubiquitination of RNA-protein cross-links, leading to their degradation. This chain is E3 ubiquitin-protein ligase itt1 (itt1), found in Schizosaccharomyces pombe (strain 972 / ATCC 24843) (Fission yeast).